An 88-amino-acid polypeptide reads, in one-letter code: Small ribosomal subunit protein uS15 (88 aa).

This sequence belongs to the universal ribosomal protein uS15 family. Part of the 30S ribosomal subunit. Forms a bridge to the 50S subunit in the 70S ribosome, contacting the 23S rRNA.

Its function is as follows. One of the primary rRNA binding proteins, it binds directly to 16S rRNA where it helps nucleate assembly of the platform of the 30S subunit by binding and bridging several RNA helices of the 16S rRNA. Forms an intersubunit bridge (bridge B4) with the 23S rRNA of the 50S subunit in the ribosome. This chain is Small ribosomal subunit protein uS15, found in Variovorax paradoxus (strain S110).